Consider the following 208-residue polypeptide: Probable GTP-binding protein EngB (208 aa).

Positions 23–205 (LTSEMVILGR…RQTLLKYLLT (183 aa)) constitute an EngB-type G domain. Residues 31-38 (GRSNVGKS), 57-61 (GKTRL), 84-87 (DLPG), 154-157 (TKFD), and 182-184 (FNA) contribute to the GTP site. Mg(2+) is bound by residues Ser38 and Thr59.

The protein belongs to the TRAFAC class TrmE-Era-EngA-EngB-Septin-like GTPase superfamily. EngB GTPase family. It depends on Mg(2+) as a cofactor.

Necessary for normal cell division and for the maintenance of normal septation. The polypeptide is Probable GTP-binding protein EngB (Helicobacter pylori (strain G27)).